Reading from the N-terminus, the 561-residue chain is Putative cysteine ligase BshC (561 aa).

A coiled-coil region spans residues 472–517 (LAQSVEKVMQSTLNQVENLKSKTIKAEKQRHNDLIAQIEKSRDNLL).

It belongs to the BshC family.

This Chloroherpeton thalassium (strain ATCC 35110 / GB-78) protein is Putative cysteine ligase BshC.